We begin with the raw amino-acid sequence, 838 residues long: Leucine--tRNA ligase (838 aa).

The short motif at 36-46 is the 'HIGH' region element; it reads PYPSGKIHMGH. A 'KMSKS' region motif is present at residues 611–615; it reads KMSKS. Lys-614 serves as a coordination point for ATP.

The protein belongs to the class-I aminoacyl-tRNA synthetase family.

It localises to the cytoplasm. It carries out the reaction tRNA(Leu) + L-leucine + ATP = L-leucyl-tRNA(Leu) + AMP + diphosphate. The chain is Leucine--tRNA ligase from Wolbachia pipientis wMel.